The primary structure comprises 363 residues: Protein-arginine kinase (363 aa).

One can recognise a Phosphagen kinase C-terminal domain in the interval 24 to 255 (IVLSSRIRLA…QQLIAQERAA (232 aa)). ATP is bound by residues 27–31 (SSRIR), His92, Arg126, 177–181 (RASVM), and 208–213 (RGTYGE). The RDXXRA motif of the pArg binding pocket involved in allosteric regulation motif lies at 338–343 (RDVRRA).

Belongs to the ATP:guanido phosphotransferase family.

It carries out the reaction L-arginyl-[protein] + ATP = N(omega)-phospho-L-arginyl-[protein] + ADP + H(+). With respect to regulation, appears to be allosterically activated by the binding of pArg-containing polypeptides to the pArg-binding pocket localized in the C-terminal domain of McsB. Functionally, catalyzes the specific phosphorylation of arginine residues in a large number of proteins. Is part of the bacterial stress response system. Protein arginine phosphorylation has a physiologically important role and is involved in the regulation of many critical cellular processes, such as protein homeostasis, motility, competence, and stringent and stress responses, by regulating gene expression and protein activity. The protein is Protein-arginine kinase of Geobacillus kaustophilus (strain HTA426).